Consider the following 120-residue polypeptide: Chaperonin GroEL (120 aa).

Residue 23 to 27 (DGTTT) participates in ATP binding.

Belongs to the chaperonin (HSP60) family. Forms a cylinder of 14 subunits composed of two heptameric rings stacked back-to-back. Interacts with the co-chaperonin GroES.

It is found in the cytoplasm. The enzyme catalyses ATP + H2O + a folded polypeptide = ADP + phosphate + an unfolded polypeptide.. Together with its co-chaperonin GroES, plays an essential role in assisting protein folding. The GroEL-GroES system forms a nano-cage that allows encapsulation of the non-native substrate proteins and provides a physical environment optimized to promote and accelerate protein folding. The protein is Chaperonin GroEL of Mycobacterium shimoidei.